The sequence spans 394 residues: MFVEHLELVDFRSYVRADVPMAAGATTFIGSNGQGKTNLVEAVEYLSTLSSHRVSNDTPLVRLGADQAVVRGRVRAGTDDARSLLLEVEINARRANRARINRAPLTRPRDILGVLRTVVFSPNDLAVVRGDPSDRRAFLDGLVVTRWPRMAAVKSDYERVLKQRNALLKSLSGKGRSAGAEIGATMDIWDNELATIGAELLSARLDTLSAVMPLTSAAYREIAPVNDLTTASYKSTIDLEGLWSPPQERESSTPIDRKELANRFLDTLAKRRADELIRGVTLVGPQRDDIILHIGEMPAKGYASHGESWSLALALRLGSFQLLRDDGIEPVLVLDDVFAELDATRRDRLASSVVQADQVLVTAAVASDVPEILRGERFDVGGGQVLAYEGNNDD.

Position 30 to 37 (30 to 37 (GSNGQGKT)) interacts with ATP.

This sequence belongs to the RecF family.

Its subcellular location is the cytoplasm. In terms of biological role, the RecF protein is involved in DNA metabolism; it is required for DNA replication and normal SOS inducibility. RecF binds preferentially to single-stranded, linear DNA. It also seems to bind ATP. The polypeptide is DNA replication and repair protein RecF (Cutibacterium acnes (strain DSM 16379 / KPA171202) (Propionibacterium acnes)).